The primary structure comprises 240 residues: tRNA (guanine-N(1)-)-methyltransferase (240 aa).

Residues Gly110 and 129–134 (LGDFVL) each bind S-adenosyl-L-methionine.

Belongs to the RNA methyltransferase TrmD family. Homodimer.

The protein localises to the cytoplasm. The enzyme catalyses guanosine(37) in tRNA + S-adenosyl-L-methionine = N(1)-methylguanosine(37) in tRNA + S-adenosyl-L-homocysteine + H(+). Functionally, specifically methylates guanosine-37 in various tRNAs. This Clostridium botulinum (strain 657 / Type Ba4) protein is tRNA (guanine-N(1)-)-methyltransferase.